We begin with the raw amino-acid sequence, 379 residues long: MIISASTDYRAAAKAKLPPFLFHYIDGGSYDERTLKRNTDDLGDVALRQRVLRDMTDLSLETEIFGEKLAMPIALAPVGLTGMYARRGEVQAAKAAEKKGIPFTMSTVSVCPIEEVAPAIERPMWFQLYVLKDRGFMKNVLERAKAAGVTTLVFTVDMPVPGARYRDMHSGMSGPNAAMRRVFQAMRHPSWALDVGLLGKPHDLGNISTYRGEPTKLEDYIGWLGANFDPSISWKDLEWIRDFWDGPMVIKGILDEEDAKDAVRFGADGIVVSNHGGRQLDGVLSTAKALPSIADAVKGDLKIFVDSGIRTGLDVVRMLALGADCTLLGRSFVYALAAQGGAGVENLLDLYDKEMRVAMTLTGAKTIADLSRDSLVKIP.

One can recognise an FMN hydroxy acid dehydrogenase domain in the interval 1–379; sequence MIISASTDYR…LSRDSLVKIP (379 aa). Substrate is bound at residue Y24. FMN-binding residues include S106 and Q127. Y129 contributes to the substrate binding site. An FMN-binding site is contributed by T155. Position 164 (R164) interacts with substrate. K251 serves as a coordination point for FMN. The Proton acceptor role is filled by H275. Residue R278 participates in substrate binding. 306–330 contributes to the FMN binding site; it reads DSGIRTGLDVVRMLALGADCTLLGR.

This sequence belongs to the FMN-dependent alpha-hydroxy acid dehydrogenase family. It depends on FMN as a cofactor.

It is found in the cell inner membrane. It catalyses the reaction (S)-lactate + A = pyruvate + AH2. Its function is as follows. Catalyzes the conversion of L-lactate to pyruvate. Is coupled to the respiratory chain. This is L-lactate dehydrogenase from Vibrio parahaemolyticus serotype O3:K6 (strain RIMD 2210633).